A 223-amino-acid polypeptide reads, in one-letter code: Glycerol-3-phosphate acyltransferase (223 aa).

The next 5 membrane-spanning stretches (helical) occupy residues 2–22 (LEILWIALAYVLGSAPWGLVI), 52–72 (WGVATLLCDVLKGAVPVWLAF), 78–98 (PVFVSMVALACVLGHVFSCFM), 112–132 (IFLPLAFWQLLASSLLCMLVI), and 153–173 (LAVSGQWGWLPLSLAVWAVVV). Positions 191–223 (WLKSKNKGAAAGNAAEGDDTQNMNPQDAGRKDG) are disordered.

Belongs to the PlsY family. As to quaternary structure, probably interacts with PlsX.

It localises to the cell inner membrane. The catalysed reaction is an acyl phosphate + sn-glycerol 3-phosphate = a 1-acyl-sn-glycero-3-phosphate + phosphate. Its pathway is lipid metabolism; phospholipid metabolism. Functionally, catalyzes the transfer of an acyl group from acyl-phosphate (acyl-PO(4)) to glycerol-3-phosphate (G3P) to form lysophosphatidic acid (LPA). This enzyme utilizes acyl-phosphate as fatty acyl donor, but not acyl-CoA or acyl-ACP. This is Glycerol-3-phosphate acyltransferase from Desulfovibrio desulfuricans (strain ATCC 27774 / DSM 6949 / MB).